Reading from the N-terminus, the 246-residue chain is Carboxy-S-adenosyl-L-methionine synthase (246 aa).

S-adenosyl-L-methionine is bound by residues Tyr-39, 64–66, 89–90, 117–118, Asn-132, and Arg-199; these read GCS, DN, and DI.

It belongs to the class I-like SAM-binding methyltransferase superfamily. Cx-SAM synthase family. Homodimer.

The enzyme catalyses prephenate + S-adenosyl-L-methionine = carboxy-S-adenosyl-L-methionine + 3-phenylpyruvate + H2O. Functionally, catalyzes the conversion of S-adenosyl-L-methionine (SAM) to carboxy-S-adenosyl-L-methionine (Cx-SAM). The sequence is that of Carboxy-S-adenosyl-L-methionine synthase from Enterobacter sp. (strain 638).